Reading from the N-terminus, the 257-residue chain is BTB/POZ domain-containing protein kctd15-like (257 aa).

Ser-9 and Ser-12 each carry phosphoserine. The 71-residue stretch at 30–100 folds into the BTB domain; it reads APVHIDVGGH…LRTSKLLLPE (71 aa).

In Danio rerio (Zebrafish), this protein is BTB/POZ domain-containing protein kctd15-like (kctd15l).